A 114-amino-acid polypeptide reads, in one-letter code: Large ribosomal subunit protein uL22 (114 aa).

This sequence belongs to the universal ribosomal protein uL22 family. In terms of assembly, part of the 50S ribosomal subunit.

Its function is as follows. This protein binds specifically to 23S rRNA; its binding is stimulated by other ribosomal proteins, e.g. L4, L17, and L20. It is important during the early stages of 50S assembly. It makes multiple contacts with different domains of the 23S rRNA in the assembled 50S subunit and ribosome. The globular domain of the protein is located near the polypeptide exit tunnel on the outside of the subunit, while an extended beta-hairpin is found that lines the wall of the exit tunnel in the center of the 70S ribosome. The polypeptide is Large ribosomal subunit protein uL22 (Streptococcus pneumoniae (strain Taiwan19F-14)).